The sequence spans 256 residues: Protein FixA (256 aa).

It belongs to the ETF beta-subunit/FixA family. In terms of assembly, heterodimer of FixA and FixB.

It functions in the pathway amine and polyamine metabolism; carnitine metabolism. Required for anaerobic carnitine reduction. May bring reductant to CaiA. In Escherichia coli O7:K1 (strain IAI39 / ExPEC), this protein is Protein FixA.